A 416-amino-acid polypeptide reads, in one-letter code: Serine protease inhibitor A3K (416 aa).

Residues 1-20 (MAFIAALGLLMAGICPAVLC) form the signal peptide. Asn102, Asn182, Asn220, and Asn267 each carry an N-linked (GlcNAc...) asparagine glycan. Residues 365–392 (GTEGAAATAVTAALKSLPQTIPLLNFNR) are RCL.

The protein belongs to the serpin family. Post-translationally, N-glycosylated. In terms of tissue distribution, liver and plasma.

The protein localises to the secreted. In terms of biological role, binds to and inhibits kallikreins. Inhibits trypsin but not chymotrypsin or elastase. The polypeptide is Serine protease inhibitor A3K (Serpina3k) (Rattus norvegicus (Rat)).